Consider the following 318-residue polypeptide: ATP synthase gamma chain (318 aa).

The protein belongs to the ATPase gamma chain family. F-type ATPases have 2 components, CF(1) - the catalytic core - and CF(0) - the membrane proton channel. CF(1) has five subunits: alpha(3), beta(3), gamma(1), delta(1), epsilon(1). CF(0) has three main subunits: a, b and c.

The protein resides in the cell membrane. Functionally, produces ATP from ADP in the presence of a proton gradient across the membrane. The gamma chain is believed to be important in regulating ATPase activity and the flow of protons through the CF(0) complex. The polypeptide is ATP synthase gamma chain (Lactobacillus johnsonii (strain CNCM I-12250 / La1 / NCC 533)).